Consider the following 216-residue polypeptide: Uracil phosphoribosyltransferase (216 aa).

Residues Arg30, Arg39, 73-76 (ASKI), and Lys75 contribute to the GTP site. Arg83 serves as a coordination point for 5-phospho-alpha-D-ribose 1-diphosphate. A GTP-binding site is contributed by Lys100. Arg108 contributes to the 5-phospho-alpha-D-ribose 1-diphosphate binding site. Arg129 provides a ligand contact to GTP. Residues Asp135 and 135–143 (DPMLATGGT) each bind 5-phospho-alpha-D-ribose 1-diphosphate. D-ribose 5-phosphate is bound at residue Tyr199. Uracil-binding positions include Ile200 and 205 to 207 (GDF). 5-phospho-alpha-D-ribose 1-diphosphate is bound at residue Asp206.

The protein belongs to the UPRTase family. Requires Mg(2+) as cofactor.

The catalysed reaction is UMP + diphosphate = 5-phospho-alpha-D-ribose 1-diphosphate + uracil. It participates in pyrimidine metabolism; UMP biosynthesis via salvage pathway; UMP from uracil: step 1/1. With respect to regulation, allosterically activated by GTP. Catalyzes the conversion of uracil and 5-phospho-alpha-D-ribose 1-diphosphate (PRPP) to UMP and diphosphate. This chain is Uracil phosphoribosyltransferase (uprt), found in Dictyostelium discoideum (Social amoeba).